Consider the following 107-residue polypeptide: Phosphoribosyl-ATP pyrophosphatase (107 aa).

The protein belongs to the PRA-PH family.

It localises to the cytoplasm. It catalyses the reaction 1-(5-phospho-beta-D-ribosyl)-ATP + H2O = 1-(5-phospho-beta-D-ribosyl)-5'-AMP + diphosphate + H(+). It participates in amino-acid biosynthesis; L-histidine biosynthesis; L-histidine from 5-phospho-alpha-D-ribose 1-diphosphate: step 2/9. The sequence is that of Phosphoribosyl-ATP pyrophosphatase from Bacillus mycoides (strain KBAB4) (Bacillus weihenstephanensis).